We begin with the raw amino-acid sequence, 612 residues long: Phosphomethylpyrimidine synthase (612 aa).

2 disordered regions span residues 1 to 33 (MTIKDARTPASTQNTAQADTAENTDTAEDTEAG) and 105 to 146 (AGRP…RDGN). Residues 12–24 (TQNTAQADTAENT) show a composition bias toward low complexity. The segment covering 105–117 (AGRPVRPEDDGIK) has biased composition (basic and acidic residues). Substrate-binding positions include Asn-213, Met-242, Tyr-271, His-307, 327–329 (SRG), 368–371 (DGLR), and Glu-407. Residue His-411 participates in Zn(2+) binding. A substrate-binding site is contributed by Tyr-434. His-475 lines the Zn(2+) pocket. [4Fe-4S] cluster is bound by residues Cys-555, Cys-558, and Cys-563.

It belongs to the ThiC family. The cofactor is [4Fe-4S] cluster.

It carries out the reaction 5-amino-1-(5-phospho-beta-D-ribosyl)imidazole + S-adenosyl-L-methionine = 4-amino-2-methyl-5-(phosphooxymethyl)pyrimidine + CO + 5'-deoxyadenosine + formate + L-methionine + 3 H(+). The protein operates within cofactor biosynthesis; thiamine diphosphate biosynthesis. Catalyzes the synthesis of the hydroxymethylpyrimidine phosphate (HMP-P) moiety of thiamine from aminoimidazole ribotide (AIR) in a radical S-adenosyl-L-methionine (SAM)-dependent reaction. This chain is Phosphomethylpyrimidine synthase, found in Streptomyces coelicolor (strain ATCC BAA-471 / A3(2) / M145).